The chain runs to 582 residues: Colicin-E9 (582 aa).

Disordered stretches follow at residues 1 to 74 (MSGG…SGGG), 246 to 270 (SPGVTNNTDKDVRPAGFTQGGNTRD), 294 to 321 (PDQVKQRQDEENRRQQEWDATHPVEAAE), 422 to 489 (ADAA…IADK), and 510 to 542 (SKDPELSKNLNPSNKSSVSKGYSPFTPKNQQVG). Over residues 20–35 (INGGPTGIGVSGGASD) the composition is skewed to gly residues. Positions 36 to 45 (GSGWSSENNP) are enriched in low complexity. The segment covering 46–74 (WGGGSGSGIHWGGGSGRGNGGGNGNSGGG) has biased composition (gly residues). Basic and acidic residues-rich tracts occupy residues 297-321 (VKQRQDEENRRQQEWDATHPVEAAE), 430-453 (QERRKQKENKEKDAKDKLDKESKR), and 465-476 (PVGDKWLDDAGK). A compositionally biased stretch (low complexity) spans 516–529 (SKNLNPSNKSSVSK). Positions 550, 575, and 579 each coordinate Zn(2+).

Belongs to the colicin/pyosin nuclease family.

Its function is as follows. This plasmid-coded bactericidal protein is an endonuclease active on both single- and double-stranded DNA but with undefined specificity. Functionally, colicins are polypeptide toxins produced by and active against E.coli and closely related bacteria. In Escherichia coli, this protein is Colicin-E9 (col).